Here is a 226-residue protein sequence, read N- to C-terminus: NADH-ubiquinone oxidoreductase chain 6 (226 aa).

A run of 5 helical transmembrane segments spans residues 2-22 (STLG…LVIL), 28-48 (IYSI…LLTV), 56-76 (IYIL…VMMI), 90-110 (YNIY…ILIT), and 169-189 (IWFI…IYIT).

This sequence belongs to the complex I subunit 6 family.

It is found in the mitochondrion membrane. It carries out the reaction a ubiquinone + NADH + 5 H(+)(in) = a ubiquinol + NAD(+) + 4 H(+)(out). Core subunit of the mitochondrial membrane respiratory chain NADH dehydrogenase (Complex I) that is believed to belong to the minimal assembly required for catalysis. Complex I functions in the transfer of electrons from NADH to the respiratory chain. The immediate electron acceptor for the enzyme is believed to be ubiquinone. The protein is NADH-ubiquinone oxidoreductase chain 6 (nad6) of Dictyostelium discoideum (Social amoeba).